Here is a 201-residue protein sequence, read N- to C-terminus: Protein Thf1 (201 aa).

A coiled-coil region spans residues 174 to 201; it reads IYKSSISKMEQAKELIQEQRIKDKKKTL.

Belongs to the THF1 family.

Its function is as follows. May be involved in photosynthetic membrane biogenesis. The sequence is that of Protein Thf1 from Prochlorococcus marinus (strain MIT 9312).